The chain runs to 753 residues: 5-methyltetrahydropteroyltriglutamate--homocysteine methyltransferase (753 aa).

5-methyltetrahydropteroyltri-L-glutamate is bound by residues 17–20 and Lys-117; that span reads RELK. Residues 431 to 433 and Glu-484 each bind L-homocysteine; that span reads IGS. L-methionine is bound by residues 431–433 and Glu-484; that span reads IGS. 5-methyltetrahydropteroyltri-L-glutamate-binding positions include 515–516 and Trp-561; that span reads RC. Asp-599 provides a ligand contact to L-homocysteine. Residue Asp-599 participates in L-methionine binding. Glu-605 is a 5-methyltetrahydropteroyltri-L-glutamate binding site. The Zn(2+) site is built by His-641, Cys-643, and Glu-665. Catalysis depends on His-694, which acts as the Proton donor. A Zn(2+)-binding site is contributed by Cys-726.

This sequence belongs to the vitamin-B12 independent methionine synthase family. It depends on Zn(2+) as a cofactor.

It carries out the reaction 5-methyltetrahydropteroyltri-L-glutamate + L-homocysteine = tetrahydropteroyltri-L-glutamate + L-methionine. Its pathway is amino-acid biosynthesis; L-methionine biosynthesis via de novo pathway; L-methionine from L-homocysteine (MetE route): step 1/1. In terms of biological role, catalyzes the transfer of a methyl group from 5-methyltetrahydrofolate to homocysteine resulting in methionine formation. The protein is 5-methyltetrahydropteroyltriglutamate--homocysteine methyltransferase of Shigella flexneri serotype 5b (strain 8401).